The chain runs to 424 residues: MIPKYRIRCISGGEIVPDITSLSCPAGHDSLLRTEYTSRRLQLSYHSGIFRYLCWLPVTAPLLPSGGPVTFTSDELSRELGLSRLAISFSGYSPEHHASLTTGSFKELEALATLQRLWELGKKIPVIASAGNTGRAFAGLSAQYGKPVVVVVPSSAVSRLWTTTPAQDVFLVAVDGDYTDAIAVSTALATVPGCVPEGGARNVARRDGMGTTVLDAAVTLGRIPDHYFQAVGSGTGAIAAWEAALRLIGDGRYGTKLPRLHLAQNKPFTPIVLAWQQRRRTFKPELDMPDAPNAIKEVMSPVLTNRSPPYGIGGGLFDALQATEGQMYAVSNDEGKKGMALIRDTLGIDPDPAAAVATAALVQAAAAGTVGPDDSILLNITGGGYERIREDYTLYPIEPSVTVNQHETGDTLKAELSRWVAHYG.

Lys-106 is modified (N6-(pyridoxal phosphate)lysine). Positions 132 and 381 each coordinate pyridoxal 5'-phosphate.

Belongs to the threonine synthase family. Cysteate synthase subfamily. In terms of assembly, homotrimer. It depends on pyridoxal 5'-phosphate as a cofactor.

It carries out the reaction O-phospho-L-serine + sulfite + H(+) = L-cysteate + phosphate. The protein operates within cofactor biosynthesis; coenzyme M biosynthesis. Functionally, specifically catalyzes the beta-elimination of phosphate from L-phosphoserine and the beta-addition of sulfite to the dehydroalanine intermediate to produce L-cysteate. The sequence is that of Cysteate synthase from Methanoregula boonei (strain DSM 21154 / JCM 14090 / 6A8).